The following is an 89-amino-acid chain: HssA/B-like protein 22 (89 aa).

This sequence belongs to the hssA/B family.

The protein is HssA/B-like protein 22 (hssl22) of Dictyostelium discoideum (Social amoeba).